The following is a 229-amino-acid chain: Enolase-phosphatase E1 (229 aa).

It belongs to the HAD-like hydrolase superfamily. MasA/MtnC family. As to quaternary structure, monomer. Mg(2+) is required as a cofactor.

It carries out the reaction 5-methylsulfanyl-2,3-dioxopentyl phosphate + H2O = 1,2-dihydroxy-5-(methylsulfanyl)pent-1-en-3-one + phosphate. Its pathway is amino-acid biosynthesis; L-methionine biosynthesis via salvage pathway; L-methionine from S-methyl-5-thio-alpha-D-ribose 1-phosphate: step 3/6. The protein operates within amino-acid biosynthesis; L-methionine biosynthesis via salvage pathway; L-methionine from S-methyl-5-thio-alpha-D-ribose 1-phosphate: step 4/6. Its function is as follows. Bifunctional enzyme that catalyzes the enolization of 2,3-diketo-5-methylthiopentyl-1-phosphate (DK-MTP-1-P) into the intermediate 2-hydroxy-3-keto-5-methylthiopentenyl-1-phosphate (HK-MTPenyl-1-P), which is then dephosphorylated to form the acireductone 1,2-dihydroxy-3-keto-5-methylthiopentene (DHK-MTPene). The chain is Enolase-phosphatase E1 from Serratia proteamaculans (strain 568).